We begin with the raw amino-acid sequence, 557 residues long: 2-succinyl-5-enolpyruvyl-6-hydroxy-3-cyclohexene-1-carboxylate synthase (557 aa).

It belongs to the TPP enzyme family. MenD subfamily. As to quaternary structure, homodimer. Requires Mg(2+) as cofactor. The cofactor is Mn(2+). Thiamine diphosphate is required as a cofactor.

It carries out the reaction isochorismate + 2-oxoglutarate + H(+) = 5-enolpyruvoyl-6-hydroxy-2-succinyl-cyclohex-3-ene-1-carboxylate + CO2. Its pathway is quinol/quinone metabolism; 1,4-dihydroxy-2-naphthoate biosynthesis; 1,4-dihydroxy-2-naphthoate from chorismate: step 2/7. The protein operates within quinol/quinone metabolism; menaquinone biosynthesis. In terms of biological role, catalyzes the thiamine diphosphate-dependent decarboxylation of 2-oxoglutarate and the subsequent addition of the resulting succinic semialdehyde-thiamine pyrophosphate anion to isochorismate to yield 2-succinyl-5-enolpyruvyl-6-hydroxy-3-cyclohexene-1-carboxylate (SEPHCHC). In Staphylococcus aureus (strain Mu3 / ATCC 700698), this protein is 2-succinyl-5-enolpyruvyl-6-hydroxy-3-cyclohexene-1-carboxylate synthase.